Consider the following 200-residue polypeptide: Holliday junction branch migration complex subunit RuvA (200 aa).

Positions 1 to 63 (MIASVRGEVL…EDSMTLYGFP (63 aa)) are domain I. The domain II stretch occupies residues 64–142 (DSESKELFGL…AVASTSGAVP (79 aa)). The tract at residues 142–146 (PLGAG) is flexible linker. Residues 147–200 (GGGSVRDQIVEALVGLGFPAKQAEQAADSVLAEAPESTTSTALRSALSLLGKTR) are domain III.

It belongs to the RuvA family. As to quaternary structure, homotetramer. Forms an RuvA(8)-RuvB(12)-Holliday junction (HJ) complex. HJ DNA is sandwiched between 2 RuvA tetramers; dsDNA enters through RuvA and exits via RuvB. An RuvB hexamer assembles on each DNA strand where it exits the tetramer. Each RuvB hexamer is contacted by two RuvA subunits (via domain III) on 2 adjacent RuvB subunits; this complex drives branch migration. In the full resolvosome a probable DNA-RuvA(4)-RuvB(12)-RuvC(2) complex forms which resolves the HJ.

Its subcellular location is the cytoplasm. The RuvA-RuvB-RuvC complex processes Holliday junction (HJ) DNA during genetic recombination and DNA repair, while the RuvA-RuvB complex plays an important role in the rescue of blocked DNA replication forks via replication fork reversal (RFR). RuvA specifically binds to HJ cruciform DNA, conferring on it an open structure. The RuvB hexamer acts as an ATP-dependent pump, pulling dsDNA into and through the RuvAB complex. HJ branch migration allows RuvC to scan DNA until it finds its consensus sequence, where it cleaves and resolves the cruciform DNA. This chain is Holliday junction branch migration complex subunit RuvA, found in Rhodococcus jostii (strain RHA1).